The following is a 293-amino-acid chain: Lysosomal amino acid transporter 1 homolog (293 aa).

Topologically, residues 1–37 (MVWRTLVASNFSTCPNGSIQWIWDVFGECAQDGWDEA) are lumenal. N-linked (GlcNAc...) asparagine glycosylation occurs at Asn-10. The PQ-loop 1 domain occupies 34 to 100 (WDEASVALGL…LADQLPLQTY (67 aa)). The chain crosses the membrane as a helical span at residues 38-58 (SVALGLVSIFCFAASTFPQYI). Residues 59–71 (KACKTGNMDQALS) lie on the Cytoplasmic side of the membrane. Residues 72-92 (LWFLLGWIGGDSCNLIGSFLA) traverse the membrane as a helical segment. The Lumenal portion of the chain corresponds to 93-96 (DQLP). The chain crosses the membrane as a helical span at residues 97-117 (LQTYTAVYYVLADLLMLTLYF). Topologically, residues 118–126 (HYKFKKQPS) are cytoplasmic. A helical membrane pass occupies residues 127 to 147 (LLSAPINSVLLFILGTVCITP). At 148 to 182 (LLSSTDPVAVPREGFRGRTLLSVEPGNKPFTKKEV) the chain is on the lumenal side. The helical transmembrane segment at 183-203 (VGFVIGSASSVLYLLSRLPQI) threads the bilayer. Residues 191–243 (SSVLYLLSRLPQIRTNFVRQSTQGISYSLFALVMLGNTLYGLSVLLKNPEVGQ) form the PQ-loop 2 domain. The Cytoplasmic portion of the chain corresponds to 204-214 (RTNFVRQSTQG). A helical transmembrane segment spans residues 215 to 235 (ISYSLFALVMLGNTLYGLSVL). The Lumenal portion of the chain corresponds to 236–254 (LKNPEVGQSEGSYLLHHLP). A helical transmembrane segment spans residues 255 to 275 (WLVGSLGVLLLDTIISIQFLV). At 276–293 (YRSHDADAASEREPLLPS) the chain is on the cytoplasmic side. A Di-leucine motif motif is present at residues 290–291 (LL).

Belongs to the laat-1 family.

Its subcellular location is the lysosome membrane. Functionally, amino acid transporter that specifically mediates the pH-dependent export of the cationic amino acids arginine, histidine and lysine from lysosomes. In Rattus norvegicus (Rat), this protein is Lysosomal amino acid transporter 1 homolog (Slc66a1).